We begin with the raw amino-acid sequence, 331 residues long: NADH-quinone oxidoreductase subunit H 2 (331 aa).

A run of 8 helical transmembrane segments spans residues 6-26 (AGFLVLIAKLTIVLAVLLLVA), 79-99 (IFMLAPAVVAATALLVFAVIP), 120-140 (VGLLYFFALSSLGVYGVALGG), 155-175 (GAAQMISYELSLGLAIVPVVM), 193-213 (PFILTQPVAFAIFVISAMAEI), 242-262 (LFFLGEYVNMQVLGGLVAVLF), 271-291 (LPPVVWLFIKIVLVALIMIWV), and 310-330 (VLIPLALVNIMVTGAWVLWMG).

This sequence belongs to the complex I subunit 1 family. NDH-1 is composed of 14 different subunits. Subunits NuoA, H, J, K, L, M, N constitute the membrane sector of the complex.

The protein resides in the cell inner membrane. It catalyses the reaction a quinone + NADH + 5 H(+)(in) = a quinol + NAD(+) + 4 H(+)(out). Its function is as follows. NDH-1 shuttles electrons from NADH, via FMN and iron-sulfur (Fe-S) centers, to quinones in the respiratory chain. The immediate electron acceptor for the enzyme in this species is believed to be ubiquinone. Couples the redox reaction to proton translocation (for every two electrons transferred, four hydrogen ions are translocated across the cytoplasmic membrane), and thus conserves the redox energy in a proton gradient. This subunit may bind ubiquinone. The polypeptide is NADH-quinone oxidoreductase subunit H 2 (Syntrophobacter fumaroxidans (strain DSM 10017 / MPOB)).